A 362-amino-acid chain; its full sequence is Methionine import ATP-binding protein MetN (362 aa).

One can recognise an ABC transporter domain in the interval 2–241; that stretch reads IHIKNLSKTY…PQHDVTRAMV (240 aa). 38-45 serves as a coordination point for ATP; it reads GPSGAGKS.

Belongs to the ABC transporter superfamily. Methionine importer (TC 3.A.1.24) family. The complex is composed of two ATP-binding proteins (MetN), two transmembrane proteins (MetI) and a solute-binding protein (MetQ).

Its subcellular location is the cell inner membrane. It carries out the reaction L-methionine(out) + ATP + H2O = L-methionine(in) + ADP + phosphate + H(+). The catalysed reaction is D-methionine(out) + ATP + H2O = D-methionine(in) + ADP + phosphate + H(+). In terms of biological role, part of the ABC transporter complex MetNIQ involved in methionine import. Responsible for energy coupling to the transport system. The polypeptide is Methionine import ATP-binding protein MetN (Bordetella avium (strain 197N)).